The following is an 862-amino-acid chain: DNA gyrase subunit A (862 aa).

The Topo IIA-type catalytic domain maps to 38–501; the sequence is LPDARDGLKP…DYDDIDVEDL (464 aa). The O-(5'-phospho-DNA)-tyrosine intermediate role is filled by tyrosine 126. A GyrA-box motif is present at residues 528–534; that stretch reads QKRGGKG. Residues 843–862 form a disordered region; the sequence is KEESDDDDIVADDTQEQDME. Positions 845 to 862 are enriched in acidic residues; that stretch reads ESDDDDIVADDTQEQDME.

It belongs to the type II topoisomerase GyrA/ParC subunit family. In terms of assembly, heterotetramer, composed of two GyrA and two GyrB chains. In the heterotetramer, GyrA contains the active site tyrosine that forms a transient covalent intermediate with DNA, while GyrB binds cofactors and catalyzes ATP hydrolysis.

The protein resides in the cytoplasm. It catalyses the reaction ATP-dependent breakage, passage and rejoining of double-stranded DNA.. Its function is as follows. A type II topoisomerase that negatively supercoils closed circular double-stranded (ds) DNA in an ATP-dependent manner to modulate DNA topology and maintain chromosomes in an underwound state. Negative supercoiling favors strand separation, and DNA replication, transcription, recombination and repair, all of which involve strand separation. Also able to catalyze the interconversion of other topological isomers of dsDNA rings, including catenanes and knotted rings. Type II topoisomerases break and join 2 DNA strands simultaneously in an ATP-dependent manner. The chain is DNA gyrase subunit A from Campylobacter fetus.